Here is a 406-residue protein sequence, read N- to C-terminus: Phosphopentomutase (406 aa).

The Mn(2+) site is built by Asp10, Asp305, His310, Asp346, His347, and His358.

This sequence belongs to the phosphopentomutase family. Requires Mn(2+) as cofactor.

It is found in the cytoplasm. The enzyme catalyses 2-deoxy-alpha-D-ribose 1-phosphate = 2-deoxy-D-ribose 5-phosphate. It carries out the reaction alpha-D-ribose 1-phosphate = D-ribose 5-phosphate. Its pathway is carbohydrate degradation; 2-deoxy-D-ribose 1-phosphate degradation; D-glyceraldehyde 3-phosphate and acetaldehyde from 2-deoxy-alpha-D-ribose 1-phosphate: step 1/2. Functionally, isomerase that catalyzes the conversion of deoxy-ribose 1-phosphate (dRib-1-P) and ribose 1-phosphate (Rib-1-P) to deoxy-ribose 5-phosphate (dRib-5-P) and ribose 5-phosphate (Rib-5-P), respectively. The sequence is that of Phosphopentomutase from Rhizobium rhizogenes (strain K84 / ATCC BAA-868) (Agrobacterium radiobacter).